The primary structure comprises 397 residues: SET domain-containing protein 4 (397 aa).

One can recognise an SET domain in the interval 29–245 (AKLEPCRFKE…KCSEVFINYG (217 aa)). Tyr-244 contributes to the S-adenosyl-L-methionine binding site.

The protein belongs to the class V-like SAM-binding methyltransferase superfamily. SETD4 family.

It is found in the nucleus. The catalysed reaction is L-lysyl(79)-[histone H3] + 3 S-adenosyl-L-methionine = N(6),N(6),N(6)-trimethyl-L-lysyl(79)-[histone H3] + 3 S-adenosyl-L-homocysteine + 3 H(+). It carries out the reaction L-lysyl(20)-[histone H4] + S-adenosyl-L-methionine = N(6)-methyl-L-lysyl(20)-[histone H4] + S-adenosyl-L-homocysteine + H(+). It catalyses the reaction N(6)-methyl-L-lysyl(20)-[histone H4] + S-adenosyl-L-methionine = N(6),N(6)-dimethyl-L-lysyl(20)-[histone H4] + S-adenosyl-L-homocysteine + H(+). The enzyme catalyses N(6),N(6)-dimethyl-L-lysyl(20)-[histone H4] + S-adenosyl-L-methionine = N(6),N(6),N(6)-trimethyl-L-lysyl(20)-[histone H4] + S-adenosyl-L-homocysteine + H(+). Functionally, protein-lysine N-methyltransferase involved in the regulation of cell quiescence by catalyzing the trimethylation of 'Lys-20' of histone H4 and 'Lys-79' of histone H3 (H4K20me3 and H3K79me3, respectively) during diapause formation, a state of obligate dormancy. The polypeptide is SET domain-containing protein 4 (Artemia parthenogenetica (Brine shrimp)).